Consider the following 305-residue polypeptide: MTSIHVQVPATTANIGAGFDCLGAALSLHNQFQFRLAGESEPFFSLELVGADVETQKLEATADNLLYRAFAKVFATLGQPVPHVNIAIDLKVPLSRGLGSSATAIVGGLVGANALAGSPLSQREIMNLAIEMEGHPDNVVPALLGGCQLSVKHQQDWVICPWVWHENVVPVVAIPDFELSTEEARAVLPQQYARAQAIFNASRLGLLPHGLAQNNPEYLTAALDDQIHQPYRKNLIKGYDPVQQAAIAAGAYGMVISGAGPTLLALAAPENAPKVATAMQTAWEGIGVKAIAHVLEIDQQGTVIL.

Residue 93-103 coordinates ATP; sequence PLSRGLGSSAT.

Belongs to the GHMP kinase family. Homoserine kinase subfamily.

Its subcellular location is the cytoplasm. It catalyses the reaction L-homoserine + ATP = O-phospho-L-homoserine + ADP + H(+). It participates in amino-acid biosynthesis; L-threonine biosynthesis; L-threonine from L-aspartate: step 4/5. Catalyzes the ATP-dependent phosphorylation of L-homoserine to L-homoserine phosphate. This is Homoserine kinase from Picosynechococcus sp. (strain ATCC 27264 / PCC 7002 / PR-6) (Agmenellum quadruplicatum).